The sequence spans 320 residues: Transmembrane protein 41 homolog (320 aa).

The disordered stretch occupies residues 20–72; that stretch reads GRAKALQEHSPDQVATPLLPQVPPQEQQDLNPQQQQQQQQQQQATPQKQAMSA. Over residues 43 to 68 the composition is skewed to low complexity; it reads PQEQQDLNPQQQQQQQQQQQATPQKQ. Helical transmembrane passes span 83-103, 141-161, 173-195, 225-242, 245-265, and 289-309; these read VIVA…YAIF, VMFG…PGSL, FPIA…YTLS, LFNY…PNWF, LASP…FCGV, and FSWT…LPGL.

It belongs to the TMEM41 family. As to expression, in embryos, strongly expressed in the nervous system.

The protein resides in the membrane. Its function is as follows. Required in cholinergic neurons, but not in motor neurons, for normal neurotransmitter release by motor neurons. Involved in muscle growth. The chain is Transmembrane protein 41 homolog (stas) from Drosophila melanogaster (Fruit fly).